The sequence spans 64 residues: Alpha-toxin Ts5 (64 aa).

One can recognise an LCN-type CS-alpha/beta domain in the interval 2-64 (KDGYPVEGDN…KEPTKTSGRC (63 aa)). 4 cysteine pairs are disulfide-bonded: Cys12-Cys64, Cys16-Cys38, Cys24-Cys44, and Cys28-Cys46.

It belongs to the long (4 C-C) scorpion toxin superfamily. Sodium channel inhibitor family. Alpha subfamily. Expressed by the venom gland.

It localises to the secreted. In terms of biological role, alpha toxins bind voltage-independently at site-3 of sodium channels (Nav) and inhibit the inactivation of the activated channels, thereby blocking neuronal transmission. By extending the depolarized period it indirectly affects beta-cell voltage-dependent potassium channels, thus increasing potassium permeability. This is Alpha-toxin Ts5 from Tityus serrulatus (Brazilian scorpion).